We begin with the raw amino-acid sequence, 271 residues long: MAGLAISPPLGLSFSSRTRNPKPTSFLSHNQRNPIRRIVSALQSPYGDSLKAGLSSNVSGSPIKIDNKAPRFGVIEAKKGNPPVMPSVMTPGGPLDLSSVLFRNRIIFIGQPINAQVAQRVISQLVTLASIDDKSDILMYLNCPGGSTYSVLAIYDCMSWIKPKVGTVAFGVAASQGALLLAGGEKGMRYAMPNTRVMIHQPQTGCGGHVEDVRRQVNEAIEARQKIDRMYAAFTGQPLEKVQQYTERDRFLSASEALEFGLIDGLLETEY.

The interval 1–30 (MAGLAISPPLGLSFSSRTRNPKPTSFLSHN) is disordered. Residues 1–77 (MAGLAISPPL…KAPRFGVIEA (77 aa)) constitute a chloroplast transit peptide. Over residues 13–30 (SFSSRTRNPKPTSFLSHN) the composition is skewed to polar residues. Catalysis depends on Ser175, which acts as the Nucleophile. The active site involves His200.

The protein belongs to the peptidase S14 family. In terms of assembly, component of the chloroplastic Clp protease core complex which consist of at least 16 proteins: CLPP4 (3 copies), CLPP5 (3 copies), CLPR4 (2 copies), ClpP1 (1 copy), CLPP6 (1 copy), CLPR2 (1 copy), CLPT1 (1 copy), CLPT2 (1 copy) and 3 copies of CLPP3 and/or CLPR1 and/or CLPR3. The core complex is organized in two heptameric rings, one containing CLPP3,4,5,6 in a 1:2:3:1 ratio and the other CLPP1 and CLPR1,2,3,4 in a 3:1:1:1:1 ratio. As to expression, mostly expressed in leaves. Also detected in stems, and to a lower extent, in roots (at protein level).

Its subcellular location is the plastid. The protein localises to the chloroplast stroma. It carries out the reaction Hydrolysis of proteins to small peptides in the presence of ATP and magnesium. alpha-casein is the usual test substrate. In the absence of ATP, only oligopeptides shorter than five residues are hydrolyzed (such as succinyl-Leu-Tyr-|-NHMec, and Leu-Tyr-Leu-|-Tyr-Trp, in which cleavage of the -Tyr-|-Leu- and -Tyr-|-Trp bonds also occurs).. Cleaves peptides in various proteins in a process that requires ATP hydrolysis. Has a chymotrypsin-like activity. Plays a major role in the degradation of misfolded proteins. Essential protein required for chloroplast development and integrity. The polypeptide is ATP-dependent Clp protease proteolytic subunit 6, chloroplastic (Arabidopsis thaliana (Mouse-ear cress)).